The sequence spans 757 residues: RNA-directed RNA polymerase catalytic subunit (757 aa).

The disordered stretch occupies residues 52 to 82 (KGKWTTNTETGAPQLNPIDGPLPEDNEPSGY). Over residues 55-64 (WTTNTETGAP) the composition is skewed to polar residues. 2 short sequence motifs (nuclear localization signal) span residues 187–195 (RKRRVRDNM) and 203–216 (RTIGKKKQRLNKKS). Positions 249 to 256 (RGFVYFVE) are promoter-binding site. Positions 286–483 (VRKMMTNSQD…GINMSKKKSY (198 aa)) constitute a RdRp catalytic domain.

The protein belongs to the influenza viruses polymerase PB1 family. As to quaternary structure, influenza RNA polymerase is composed of three subunits: PB1, PB2 and PA. Interacts (via N-terminus) with PA (via C-terminus). Interacts (via C-terminus) with PB2 (via N-terminus); this interaction is essential for transcription initiation. Phosphorylated by host PRKCA.

It is found in the host nucleus. Its subcellular location is the host cytoplasm. The enzyme catalyses RNA(n) + a ribonucleoside 5'-triphosphate = RNA(n+1) + diphosphate. In terms of biological role, RNA-dependent RNA polymerase which is responsible for replication and transcription of virus RNA segments. The transcription of viral mRNAs occurs by a unique mechanism called cap-snatching. 5' methylated caps of cellular mRNAs are cleaved after 10-13 nucleotides by PA. In turn, these short capped RNAs are used as primers by PB1 for transcription of viral mRNAs. During virus replication, PB1 initiates RNA synthesis and copy vRNA into complementary RNA (cRNA) which in turn serves as a template for the production of more vRNAs. The protein is RNA-directed RNA polymerase catalytic subunit of Influenza A virus (strain A/Chicken/Shantou/4231/2003 H5N1 genotype V).